We begin with the raw amino-acid sequence, 319 residues long: Pantothenate kinase (319 aa).

96 to 103 (GSVAVGKS) contributes to the ATP binding site.

The protein belongs to the prokaryotic pantothenate kinase family.

Its subcellular location is the cytoplasm. It catalyses the reaction (R)-pantothenate + ATP = (R)-4'-phosphopantothenate + ADP + H(+). It functions in the pathway cofactor biosynthesis; coenzyme A biosynthesis; CoA from (R)-pantothenate: step 1/5. The polypeptide is Pantothenate kinase (coaA) (Bacillus subtilis (strain 168)).